The following is an 862-amino-acid chain: uncharacterized protein (862 aa).

A signal peptide spans Met1–Gly25. Residues Ser26–Arg61 are Lumenal-facing. A helical transmembrane segment spans residues Met62–Gly82. At Ser83–Val187 the chain is on the cytoplasmic side. The chain crosses the membrane as a helical span at residues Ile188–Phe208. Topologically, residues Leu209–Asp230 are lumenal. The helical transmembrane segment at Ala231–Val250 threads the bilayer. Topologically, residues Ser251–Ser256 are cytoplasmic. Residues Val257 to Phe277 form a helical membrane-spanning segment. Residues Arg278–Pro329 lie on the Lumenal side of the membrane. Residues Phe330 to Phe350 traverse the membrane as a helical segment. At Leu351–Ser372 the chain is on the cytoplasmic side. A helical membrane pass occupies residues Phe373 to Met393. Residues Ser394–Tyr404 lie on the Lumenal side of the membrane. A helical transmembrane segment spans residues Glu405 to Met425. At Asn426–Arg457 the chain is on the cytoplasmic side. Residues Val458 to Ser480 form a helical membrane-spanning segment. Residues Ser481–Ser483 are Lumenal-facing. Residues Ala484–Val503 form a helical membrane-spanning segment. The Cytoplasmic portion of the chain corresponds to Arg504–Thr514. Residues Leu515–Pro535 traverse the membrane as a helical segment. The Lumenal segment spans residues Arg536–Asp545. A helical membrane pass occupies residues Leu546–Ser566. The Cytoplasmic portion of the chain corresponds to Thr567–Pro862. Residues Gln668–Met686 are compositionally biased toward polar residues. 2 disordered regions span residues Gln668–Lys717 and Val815–Pro862. Over residues Ser689 to Ser700 the composition is skewed to low complexity. Residues Glu834–Asp850 are compositionally biased toward basic and acidic residues.

This sequence belongs to the transient receptor potential (TRP) ion channel family.

It localises to the cytoplasm. It is found in the golgi apparatus membrane. This is an uncharacterized protein from Schizosaccharomyces pombe (strain 972 / ATCC 24843) (Fission yeast).